The primary structure comprises 178 residues: Caveolin-1 (178 aa).

Ser-2 is subject to N-acetylserine. A Phosphoserine modification is found at Ser-2. Positions 2–94 (SGGKYVDSEG…WKASFTTFTV (93 aa)) are required for homooligomerization. The Cytoplasmic portion of the chain corresponds to 2–104 (SGGKYVDSEG…TKYWFYRLLS (103 aa)). N6-acetyllysine; alternate is present on Lys-5. Lys-5 participates in a covalent cross-link: Glycyl lysine isopeptide (Lys-Gly) (interchain with G-Cter in ubiquitin); alternate. Residue Tyr-6 is modified to Phosphotyrosine. Ser-9 bears the Phosphoserine mark. Tyr-14 is modified (phosphotyrosine; by ABL1). The residue at position 25 (Tyr-25) is a Phosphotyrosine. Residues Lys-26, Lys-30, Lys-39, Lys-47, and Lys-57 each participate in a glycyl lysine isopeptide (Lys-Gly) (interchain with G-Cter in ubiquitin) cross-link. The interaction with CAVIN3 stretch occupies residues 82–94 (DGIWKASFTTFTV). Positions 105-125 (AVFGIPMALIWGIYFAIVSFL) form an intramembrane region, helical. Topologically, residues 126-178 (HIWVVVPYIKSFLIEIQCISRVYSIYIHTFCDPLFEAFGKVFSNIRINTQKEI) are cytoplasmic. The interacts with SPRY1, SPRY2, SPRY3 and SPRY4 stretch occupies residues 131–142 (VPYIKSFLIEIQ). S-palmitoyl cysteine attachment occurs at residues Cys-143 and Cys-156. An interacts with SPRY1, SPRY2, and SPRY4 region spans residues 149–160 (SIYIHTFCDPLF). The tract at residues 167–178 (FSNIRINTQKEI) is interacts with SPRY1, SPRY2, SPRY3 and SPRY4.

This sequence belongs to the caveolin family. Homooligomer. Interacts (via the N-terminus) with DPP4; the interaction is direct. Forms a stable heterooligomeric complex with CAV2 that targets to lipid rafts and drives caveolae formation. Interacts with PACSIN2; this interaction induces membrane tubulation. Interacts with BMX, BTK, CTNNB1, CDH1, GLIPR2, JUP, NOSTRIN, SNAP25 and STX1A. Interacts with SLC7A9. Interacts with TGFBR1. Interacts with CAVIN3 (via leucine-zipper domain) in a cholesterol-sensitive manner. Interacts with CAVIN1. Interacts with EHD2 in a cholesterol-dependent manner. Forms a ternary complex with UBXN6 and VCP; mediates CAV1 targeting to lysosomes for degradation. Interacts with ABCG1; this interaction regulates ABCG1-mediated cholesterol efflux. Interacts with NEU3; this interaction enhances NEU3 sialidase activity within caveola. Interacts (via C-terminus) with SPRY1, SPRY2 (via C-terminus), SPRY3, and SPRY4. Post-translationally, phosphorylated at Tyr-14 by ABL1 in response to oxidative stress. Ubiquitinated. Undergo monoubiquitination and multi- and/or polyubiquitination. Monoubiquitination of N-terminal lysines promotes integration in a ternary complex with UBXN6 and VCP which promotes oligomeric CAV1 targeting to lysosomes for degradation. Ubiquitinated by ZNRF1; leading to degradation and modulation of the TLR4-mediated immune response.

Its subcellular location is the golgi apparatus membrane. The protein localises to the cell membrane. It localises to the membrane. The protein resides in the caveola. It is found in the membrane raft. Functionally, may act as a scaffolding protein within caveolar membranes. Forms a stable heterooligomeric complex with CAV2 that targets to lipid rafts and drives caveolae formation. Mediates the recruitment of CAVIN proteins (CAVIN1/2/3/4) to the caveolae. Interacts directly with G-protein alpha subunits and can functionally regulate their activity. Involved in the costimulatory signal essential for T-cell receptor (TCR)-mediated T-cell activation. Its binding to DPP4 induces T-cell proliferation and NF-kappa-B activation in a T-cell receptor/CD3-dependent manner. Recruits CTNNB1 to caveolar membranes and may regulate CTNNB1-mediated signaling through the Wnt pathway. Negatively regulates TGFB1-mediated activation of SMAD2/3 by mediating the internalization of TGFBR1 from membrane rafts leading to its subsequent degradation. Binds 20(S)-hydroxycholesterol (20(S)-OHC). The sequence is that of Caveolin-1 (CAV1) from Rhinolophus ferrumequinum (Greater horseshoe bat).